We begin with the raw amino-acid sequence, 290 residues long: 2-dehydro-3-deoxy-phosphogluconate/2-dehydro-3-deoxy-6-phosphogalactonate aldolase (290 aa).

Substrate is bound by residues 42-43 (TT), 129-131 (YNY), and 155-157 (KDT). Residue lysine 155 is the Schiff-base intermediate with substrate of the active site.

The protein belongs to the DapA family. KDPG aldolase subfamily. Homotetramer; dimer of dimers.

The catalysed reaction is 2-dehydro-3-deoxy-6-phospho-D-gluconate = D-glyceraldehyde 3-phosphate + pyruvate. It carries out the reaction 2-dehydro-3-deoxy-6-phospho-D-galactonate = D-glyceraldehyde 3-phosphate + pyruvate. It functions in the pathway carbohydrate acid metabolism; 2-dehydro-3-deoxy-D-gluconate degradation; D-glyceraldehyde 3-phosphate and pyruvate from 2-dehydro-3-deoxy-D-gluconate: step 2/2. Functionally, involved in the degradation of glucose and galactose via the Entner-Doudoroff pathway. Catalyzes the reversible cleavage of 2-keto-3-deoxy-6-phosphogluconate (KDPG) and 2-keto-3-deoxygluconate (KDG) forming pyruvate and glyceraldehyde 3-phosphate or glyceraldehyde, respectively. It is also able to catalyze the reversible cleavage of 2-keto-3-deoxy-6-phosphogalactonate (KDPGal) and 2-keto-3-deoxygalactonate (KDGal). This chain is 2-dehydro-3-deoxy-phosphogluconate/2-dehydro-3-deoxy-6-phosphogalactonate aldolase (kdgA), found in Sulfurisphaera tokodaii (strain DSM 16993 / JCM 10545 / NBRC 100140 / 7) (Sulfolobus tokodaii).